An 85-amino-acid polypeptide reads, in one-letter code: Cell division topological specificity factor (85 aa).

This sequence belongs to the MinE family.

Functionally, prevents the cell division inhibition by proteins MinC and MinD at internal division sites while permitting inhibition at polar sites. This ensures cell division at the proper site by restricting the formation of a division septum at the midpoint of the long axis of the cell. This Shewanella amazonensis (strain ATCC BAA-1098 / SB2B) protein is Cell division topological specificity factor.